Reading from the N-terminus, the 398-residue chain is Alpha-2,8-sialyltransferase 8F (398 aa).

At 1–3 (MRP) the chain is on the cytoplasmic side. The chain crosses the membrane as a helical; Signal-anchor for type II membrane protein span at residues 4-24 (GGALLALLASLLLLLLLRLLW). Residues 25-398 (CPADAPGRAR…KLQFSKCEVA (374 aa)) are Lumenal-facing. Asn66, Asn93, Asn151, and Asn196 each carry an N-linked (GlcNAc...) asparagine glycan. 2 disulfide bridges follow: Cys186/Cys335 and Cys200/Cys395. Substrate contacts are provided by residues Asn214, 236 to 238 (NPS), and 322 to 324 (STG). His370 (proton donor/acceptor) is an active-site residue.

Belongs to the glycosyltransferase 29 family.

The protein localises to the golgi apparatus membrane. The catalysed reaction is a ganglioside GM3 + CMP-N-acetyl-beta-neuraminate = a ganglioside GD3 + CMP + H(+). It carries out the reaction a ganglioside GM3 (d18:1(4E)) + CMP-N-acetyl-beta-neuraminate = a ganglioside GD3 (d18:1(4E)) + CMP + H(+). It catalyses the reaction a ganglioside GD1a (d18:1(4E)) + CMP-N-acetyl-beta-neuraminate = a ganglioside GT1a (d18:1(4E)) + CMP + H(+). The enzyme catalyses a ganglioside GD1a + CMP-N-acetyl-beta-neuraminate = a ganglioside GT1a + CMP + H(+). The catalysed reaction is a ganglioside GM1b (d18:1(4E)) + CMP-N-acetyl-beta-neuraminate = a ganglioside GD1c (d18:1(4E)) + CMP + H(+). It carries out the reaction a ganglioside GM1b + CMP-N-acetyl-beta-neuraminate = a ganglioside GD1c + CMP + H(+). It catalyses the reaction a ganglioside GM4 (d18:1(4E)) + CMP-N-acetyl-beta-neuraminate = an N-acetyl-alpha-neuraminosyl-(2-&gt;8)-N-acetyl-alpha-neuraminosyl-(2-&gt;3)-beta-D-galactosyl-(1&lt;-&gt;1')-N-acylsphing-4-enine + CMP + H(+). The enzyme catalyses N-acetyl-alpha-neuraminosyl-(2-&gt;3)-beta-D-galactosyl-(1&lt;-&gt;1')-ceramide + CMP-N-acetyl-beta-neuraminate = N-acetyl-alpha-neuraminosyl-(2-&gt;8)-N-acetyl-alpha-neuraminosyl-(2-&gt;3)-beta-D-galactosyl-(1&lt;-&gt;1')-ceramide + CMP + H(+). The catalysed reaction is a ganglioside GT1b (d18:1(4E)) + CMP-N-acetyl-beta-neuraminate = a ganglioside GQ1b (d18:1(4E)) + CMP + H(+). It carries out the reaction a ganglioside GT1b + CMP-N-acetyl-beta-neuraminate = a ganglioside GQ1b + CMP + H(+). Its pathway is protein modification; protein glycosylation. Its function is as follows. Alpha-2,8-sialyltransferase that prefers O-glycans to N-glycans or glycolipids as acceptor substrates. The minimal acceptor substrate is the NeuAc-alpha-2,3(6)-Gal sequence at the non-reducing end of their carbohydrate groups. In Pan troglodytes (Chimpanzee), this protein is Alpha-2,8-sialyltransferase 8F (ST8SIA6).